The following is a 224-amino-acid chain: Fibronectin type III domain-containing protein 9 (224 aa).

The Fibronectin type-III domain maps to 1–101; the sequence is MNIEVGNISY…FHTLDKSPLA (101 aa). Residues 113–133 form a helical membrane-spanning segment; it reads LWVLMAILLACFTAVLAFICL. A disordered region spans residues 175-224; that stretch reads LQGLPLVEMPRKNSRDGAELDPEANQDAPDAGALQRGGGDPPAILPHCGE. Basic and acidic residues predominate over residues 183–192; sequence MPRKNSRDGA.

Its subcellular location is the membrane. The sequence is that of Fibronectin type III domain-containing protein 9 (FNDC9) from Homo sapiens (Human).